The following is a 429-amino-acid chain: Glutamate-1-semialdehyde 2,1-aminomutase 2 (429 aa).

Position 268 is an N6-(pyridoxal phosphate)lysine (lysine 268).

It belongs to the class-III pyridoxal-phosphate-dependent aminotransferase family. HemL subfamily. Homodimer. The cofactor is pyridoxal 5'-phosphate.

It is found in the cytoplasm. It catalyses the reaction (S)-4-amino-5-oxopentanoate = 5-aminolevulinate. The protein operates within porphyrin-containing compound metabolism; protoporphyrin-IX biosynthesis; 5-aminolevulinate from L-glutamyl-tRNA(Glu): step 2/2. This is Glutamate-1-semialdehyde 2,1-aminomutase 2 from Bacillus anthracis (strain A0248).